The sequence spans 337 residues: Cytoskeleton protein RodZ (337 aa).

Over 1–111 (MNTEATHDQN…LGKRRKKRDG (111 aa)) the chain is Cytoplasmic. The region spanning 19–71 (LRNAREQLGLSQQAVAERLCLKVSTVRDIEEDKAPADLASTFLRGYIRSYARL) is the HTH cro/C1-type domain. The segment at residues 30–49 (QQAVAERLCLKVSTVRDIEE) is a DNA-binding region (H-T-H motif). Residues 112-132 (WLMTFTWLVLFVVIGLSGAWW) traverse the membrane as a helical; Signal-anchor for type II membrane protein segment. The Periplasmic portion of the chain corresponds to 133 to 337 (WQDHKAQQEE…TLNAEQSPAQ (205 aa)). Over residues 145–167 (TMADQSSAELSSNSEQGQSVPLN) the composition is skewed to polar residues. Residues 145 to 235 (TMADQSSAEL…PTAATTPDGA (91 aa)) are disordered. Positions 168-207 (TSTTTDPATTSTPPASVDTTATNTQTPAVTAPAPAVDPQQ) are enriched in low complexity. Polar residues predominate over residues 208 to 218 (NAVVSPSQANV). A compositionally biased stretch (low complexity) spans 219–235 (DTAATPAPTAATTPDGA).

This sequence belongs to the RodZ family.

Its subcellular location is the cell inner membrane. In terms of biological role, cytoskeletal protein that is involved in cell-shape control through regulation of the length of the long axis. This chain is Cytoskeleton protein RodZ, found in Shigella boydii serotype 4 (strain Sb227).